Consider the following 2131-residue polypeptide: MKGHQFKSWIFELREILREIKNSHYFLDSWTQFNSVGSFIHIFFYQERFLKLFDPRIWSILLSPNSQGSTSNRYFTIKGVVLFVVVVLIYRITNRNMVERKNLYLIGLFPIPMNSIGPRNDTLEKSFGSSNINRLIVSLLYLPKGKKISESYFLDPKESTWFLPITKKCIMPESNRGSRWWRNWIGKRRDSSCKISNETVAGIEISFKEKDIQYLEFPFVYYMDDPIRKDHDWELFDCLSLFLRNVSRENWIWLDNVRLVNKDRFFSKVRNVSSNIQYDFTRSSFVQVTDSSQLKESSDQSRDRSNSISNADSEYHTLINKREIQQLKERSILRDPSFLQTEGTEIESDRFPKCLSGYSSMPRLFTAREKQMIIHLLPEEIEQLLENPTRSIRSFFSGRWSELHLGSNPTERSTRDPQLLKKQQDVSFAPSRQSENKEMVNIFKIIKYLQNTVSIHPISSDPGCDMVPKDELDMDSSDKISFLNKNSFFDLFHLFHDRNRGGYALHHDFESEEKFQEMADLFTLSITDPDLVYHRGFSFSIDSCGLDQKQFLNEVFNSRDESKKKSLLVLSPIFYEENESFYRRIRKKGVRISRNVLNRFFLINRSDRSFEYGIQRDQIGNDTLNHRTIRKYMINQDFSNLKKSQKKWFDPLIFLSRTERFMNRDPDAYRYKWFNGSKNFQEHLEHFVSEQKSRFQVVFDQLRINQYSIDWSEVIDKKDLSKSLRFFLSKSLRFFLSKLLLFLSNSLPFFFVSFGNIPINRSEIRIYELKGPNDQLYNPLVESIGLQIVHLKKWKAFLLDDHDTFQKSKFLINGGTISPFLFNKIPKWMIDSFHTRNNSGKSFDNTDSYFSMISHDQNNWLNPVKPFHRSSLISSFYKANQLRFLNNPHHFCFYCNKRFPFYMEKARINNSDFTYRQFLNILFIHNKLFSLCVGKKKHAFLERDTISPIESQVSNIFLPNDFPIRSDLLVRRTIYSIADISGTPLTEGQLVHFERTYCQPLSDMNLSDSEKKNLHQYLNFNSNMGFIYTPCSEKYLLSEKRKKRSLCLKKCVEKGQMYRTFQRDSAFSTLSKWNLFQTYMPWFLTSTGYKYLNFLFLDTFSDLLPILSSSQKFLSILHDIMHGSGISWRILQKKLCLPPWNLISEISSKCLHNLLLPEEMIHRNNESPLIWTHLASPNVREFFYSILFLLFVAGYLVRTHLLFVFRASSELQTEFERVKSLMIPSYMIELRKLLDRYPTSEPNSFWLKNLFLVALEQLGDSLEEIRGSASGDNMLLGGGPGPAYGFKSIRSKKKYLNINLIDILDLISIIPNPINRITFSRNTRHLSHTSKEIYSLIRKRKRVNGDWIDDKIESWVASSDSIDDEEREFLVQFSTLTTEKRIDQILLSLTHSDHLSKNDSGYQLIEQPGAIYLRYLVDIHKKYLMNYEFNTSCLAERRVFLAHYQTITYSQTSCGANSFHFPSHGKPFSLRLALSPSRGILVIGSIGTGRSYLVKYLATNSYVPFITVFLNKFLDNKPKGSLIDASDDIDRDLDTELELLTMMNALTMDMMPEIDQFSITLQFELAKAMSPCIIWIPNIHDLDVNESNYLSLGLFVNYLSRDCERGSTRNILVIASTHIPQKVDPALIAPNQLNTCIKIRRLRIPQQRKHFFTLSYTRGFHLEKKMFHTNGFGSITMGSNVRDLVAFINEALSISITQKKSIIDTNTIRSALHRQTWDLRSQVRSVQDHGILFYQIGRAVAQNVLLSNCPIDPISTYMKKKSCNEGDSYLYKWYFELGTSMKKLTILLYLLSCSAGSVAQDLWSLPGPDEKNGITSYGLVENDSYLVHGLLEVEGALVGSSRIEKACSQNDRVTLFLRPELRNPLDMMQNGSCSILDHRFLYEKYESELEEGEGALDPQQIEEDLFNHIVWAPRIWNPWGFLFDCIERPNELGFPYWARSFRGKRSIYDKEDELQENDSEFLQSGTMQYQTRDRSSKEQGFFRISQFIWDPADPLFFLFKDQPFVSVFSHREFFADEEISKGLLTSQMNPPISIFQRWFIKNTQEKHFELLINRQRWLRTNSSLSNGSFRSNTLSESYQYLSNLFLSNGTLLDQMTKTLLRKRWLFPDEMKIGFMQEEKDFPFLSRKDMWP.

1484-1491 (GSIGTGRS) provides a ligand contact to ATP.

Belongs to the Ycf2 family.

It is found in the plastid. Its subcellular location is the chloroplast stroma. In terms of biological role, probable ATPase of unknown function. Its presence in a non-photosynthetic plant (Epifagus virginiana) and experiments in tobacco indicate that it has an essential function which is probably not related to photosynthesis. This is Protein Ycf2 (ycf2-A) from Spinacia oleracea (Spinach).